Here is an 857-residue protein sequence, read N- to C-terminus: MLGGLLHRGHKIKGTVVLMRKNVLHVNSVTSVGGIIGQGLDLVGSTLDTLTAFLGRPVSLQLISATKADANGKGKLGKATFLEGIITSLPTLGAGQSAFKINFEWDDGSGILGAFYIKNFMQTEFFLVSLTLEDIPNHGSIHFVCNSWIYNAKLFKSDRIFFANQTYLPSETPAPLVKYREEELHNLRGDGTGERKEWERVYDYDVYNDLGDPDKGENHARPVLGGNDTFPYPRRGRTGRKPTRKDPNSESRSNDVYLPRDEAFGHLKSSDFLTYGLKSVSQNVLPLLQSAFDLNFTPREFDSFDEVHGLYSGGIKLPTDIISKISPLPVLKEIFRTDGEQALKFPPPKVIQVSKSAWMTDEEFAREMLAGVNPNLIRCLKEFPPRSKLDSQVYGDHTSQITKEHLEPNLEGLTVDEAIQNKRLFLLGHHDPIMPYLRRINATSTKAYATRTILFLKNDGTLRPLAIELSLPHPQGDQSGAFSQVFLPADEGVESSIWLLAKAYVVVNDSCYHQLVSHWLNTHAVVEPFIIATNRHLSVVHPIYKLLHPHYRDTMNINGLARLSLVNDGGVIEQTFLWGRYSVEMSAVVYKDWVFTDQALPADLIKRGMAIEDPSCPHGIRLVIEDYPYAVDGLEIWDAIKTWVHEYVFLYYKSDDTLREDPELQACWKELVEVGHGDKKNEPWWPKMQTREELVEACAIIIWTASALHAAVNFGQYPYGGLILNRPTLSRRFMPEKGSAEYEELRKNPQKAYLKTITPKFQTLIDLSVIEILSRHASDEVYLGERDNPNWTSDTRALEAFKRFGNKLAQIENKLSERNNDEKLRNRCGPVQMPYTLLLPSSKEGLTFRGIPNSISI.

The PLAT domain occupies 38–163 (QGLDLVGSTL…LFKSDRIFFA (126 aa)). The region spanning 166-857 (TYLPSETPAP…FRGIPNSISI (692 aa)) is the Lipoxygenase domain. The segment at 212-257 (DPDKGENHARPVLGGNDTFPYPRRGRTGRKPTRKDPNSESRSNDVY) is disordered. Over residues 234-243 (RRGRTGRKPT) the composition is skewed to basic residues. Residues 244 to 257 (RKDPNSESRSNDVY) show a composition bias toward basic and acidic residues. Fe cation contacts are provided by histidine 518, histidine 523, histidine 709, asparagine 713, and isoleucine 857.

It belongs to the lipoxygenase family. As to quaternary structure, monomer. Requires Fe cation as cofactor.

It is found in the cytoplasm. It carries out the reaction (9Z,12Z)-octadecadienoate + O2 = (9S)-hydroperoxy-(10E,12Z)-octadecadienoate. Its pathway is lipid metabolism; oxylipin biosynthesis. Its function is as follows. Plant lipoxygenase may be involved in a number of diverse aspects of plant physiology including growth and development, pest resistance, and senescence or responses to wounding. It catalyzes the hydroperoxidation of lipids containing a cis,cis-1,4-pentadiene structure. This chain is Seed linoleate 9S-lipoxygenase-3 (LOX1.3), found in Glycine max (Soybean).